A 148-amino-acid chain; its full sequence is Large-conductance mechanosensitive channel (148 aa).

The next 3 helical transmembrane spans lie at 21 to 41, 45 to 65, and 92 to 112; these read IDLA…DSVV, IMPL…KFLV, and GNFL…FIIV.

Belongs to the MscL family. As to quaternary structure, homopentamer.

The protein resides in the cell inner membrane. In terms of biological role, channel that opens in response to stretch forces in the membrane lipid bilayer. May participate in the regulation of osmotic pressure changes within the cell. The protein is Large-conductance mechanosensitive channel of Bordetella petrii (strain ATCC BAA-461 / DSM 12804 / CCUG 43448).